The following is a 164-amino-acid chain: R-phycoerythrin alpha chain (164 aa).

(2R,3E)-phycoerythrobilin-binding residues include Asn47, Lys81, Cys82, Arg84, His88, Arg137, Cys139, and Arg142.

It belongs to the phycobiliprotein family. In terms of assembly, heterododecamer of 6 alpha and 6 beta chains. The basic functional unit of phycobiliproteins is a ring-shaped hexamer formed from two back-to-back trimers contacting via the alpha chain subunits. The trimers are composed of alpha/beta subunit heterodimers arranged around a three-fold axis of symmetry. The phycoerythrins also contain a gamma subunit which is located in the center of the hexamer. Contains two covalently linked phycoerythrobilin chromophores.

The protein resides in the plastid. It is found in the chloroplast thylakoid membrane. In terms of biological role, light-harvesting photosynthetic tetrapyrrole chromophore-protein from the phycobiliprotein complex. The protein is R-phycoerythrin alpha chain (rpeA) of Agarophyton chilense (Red seaweed).